The sequence spans 87 residues: Dynein light chain 1, cytoplasmic (87 aa).

This sequence belongs to the dynein light chain family. As to quaternary structure, homodimer. Cytoplasmic dynein consists of two catalytic heavy chains (HCs) and a number of non-catalytic subunits which present intermediate chains (ICs), light intermediate chains (LICs) and light chains (LCs). Component of the nuclear pore complex (NPC). NPC constitutes the exclusive means of nucleocytoplasmic transport. NPCs allow the passive diffusion of ions and small molecules and the active, nuclear transport receptor-mediated bidirectional transport of macromolecules such as proteins, RNAs, ribonucleoparticles (RNPs), and ribosomal subunits across the nuclear envelope. Due to its 8-fold rotational symmetry, all subunits are present with 8 copies or multiples thereof.

The protein localises to the cytoplasm. Its subcellular location is the cytoskeleton. The protein resides in the nucleus. It localises to the nuclear pore complex. Its function is as follows. Acts as one of several non-catalytic accessory components of the cytoplasmic dynein complex that are thought to be involved in linking dynein to cargos and to adapter proteins that regulate dynein function. Cytoplasmic dynein 1 acts as a motor for the intracellular retrograde motility of vesicles and organelles along microtubules. May play a role in changing or maintaining the spatial distribution of cytoskeletal structures. Also a component of the nuclear pore complex. This Kluyveromyces lactis (strain ATCC 8585 / CBS 2359 / DSM 70799 / NBRC 1267 / NRRL Y-1140 / WM37) (Yeast) protein is Dynein light chain 1, cytoplasmic (DYN2).